Here is a 487-residue protein sequence, read N- to C-terminus: Benzaldehyde dehydrogenase [NAD(+)] (487 aa).

Residue 232 to 237 (GSTQVG) coordinates NAD(+). Active-site residues include Glu-254 and Cys-288.

Belongs to the aldehyde dehydrogenase family. In terms of assembly, homotetramer.

It carries out the reaction benzaldehyde + NAD(+) + H2O = benzoate + NADH + 2 H(+). This is Benzaldehyde dehydrogenase [NAD(+)] (xylC) from Pseudomonas putida (Arthrobacter siderocapsulatus).